We begin with the raw amino-acid sequence, 269 residues long: Protein TORNADO 2 (269 aa).

Residues 1-10 (MPLSNNVIGC) lie on the Cytoplasmic side of the membrane. The chain crosses the membrane as a helical span at residues 11–31 (INFITVLLSIPVIGAGIWLAI). Residues 32 to 44 (GTVNSCVKLLQWP) are Extracellular-facing. Residues 45–65 (VIILGVLILLVGLAGFIGGFW) traverse the membrane as a helical segment. Residues 66 to 71 (RITWLL) lie on the Cytoplasmic side of the membrane. Residues 72-92 (VVYLIAMLILIVLLGCLVGFI) form a helical membrane-spanning segment. Topologically, residues 93–231 (YMVTIRGSGH…NIKVDWLKAD (139 aa)) are extracellular. N-linked (GlcNAc...) asparagine glycosylation occurs at asparagine 200. The chain crosses the membrane as a helical span at residues 232 to 252 (IFLLLALIGLIIVYIIGCCAF). Residues 253–269 (RNAETEDIFRKYKQGYT) lie on the Cytoplasmic side of the membrane.

This sequence belongs to the tetraspanin (TM4SF) family. In terms of tissue distribution, expressed in seedlings, roots, leaves, stems, apex, siliques and flowers. Present in ovules, prominently in nucellus and integuments.

It localises to the membrane. Its function is as follows. Involved in the basipetal transport of auxin (IAA) that modulates growth and organs organization, as well as cell differentiation. Regulates shoot apical meristem (SAM) organization in the peripheral zone. Required for initial meristematic divisions in the epidermal/lateral root cap leading to the formation of epidermal cells and a clone of lateral root cap cells, as well as for the maintenance of the radial pattern of cell specification in the root, thus regulating the distinction between the lateral root cap and epidermis. Together with WIH peptides, promotes megasporogenesis. This Arabidopsis thaliana (Mouse-ear cress) protein is Protein TORNADO 2 (TRN2).